Reading from the N-terminus, the 239-residue chain is Ribonuclease PH (239 aa).

Phosphate is bound by residues R86 and 124-126 (GTR).

It belongs to the RNase PH family. As to quaternary structure, homohexameric ring arranged as a trimer of dimers.

The enzyme catalyses tRNA(n+1) + phosphate = tRNA(n) + a ribonucleoside 5'-diphosphate. Phosphorolytic 3'-5' exoribonuclease that plays an important role in tRNA 3'-end maturation. Removes nucleotide residues following the 3'-CCA terminus of tRNAs; can also add nucleotides to the ends of RNA molecules by using nucleoside diphosphates as substrates, but this may not be physiologically important. Probably plays a role in initiation of 16S rRNA degradation (leading to ribosome degradation) during starvation. The sequence is that of Ribonuclease PH from Allorhizobium ampelinum (strain ATCC BAA-846 / DSM 112012 / S4) (Agrobacterium vitis (strain S4)).